A 209-amino-acid chain; its full sequence is Ribosomal RNA large subunit methyltransferase E (209 aa).

Residues Gly-63, Trp-65, Asp-83, Asp-99, and Asp-124 each contribute to the S-adenosyl-L-methionine site. Lys-164 serves as the catalytic Proton acceptor.

Belongs to the class I-like SAM-binding methyltransferase superfamily. RNA methyltransferase RlmE family.

It localises to the cytoplasm. It catalyses the reaction uridine(2552) in 23S rRNA + S-adenosyl-L-methionine = 2'-O-methyluridine(2552) in 23S rRNA + S-adenosyl-L-homocysteine + H(+). Specifically methylates the uridine in position 2552 of 23S rRNA at the 2'-O position of the ribose in the fully assembled 50S ribosomal subunit. This chain is Ribosomal RNA large subunit methyltransferase E, found in Klebsiella pneumoniae (strain 342).